A 215-amino-acid chain; its full sequence is Cytochrome b6 (215 aa).

A helical transmembrane segment spans residues Ile32–Phe52. Cys35 contacts heme c. 2 residues coordinate heme b: His86 and His100. A run of 3 helical transmembrane segments spans residues Ala90–Phe110, Leu116–Tyr136, and Leu186–Ile206. Positions 187 and 202 each coordinate heme b.

This sequence belongs to the cytochrome b family. PetB subfamily. In terms of assembly, the 4 large subunits of the cytochrome b6-f complex are cytochrome b6, subunit IV (17 kDa polypeptide, PetD), cytochrome f and the Rieske protein, while the 4 small subunits are PetG, PetL, PetM and PetN. The complex functions as a dimer. Heme b is required as a cofactor. It depends on heme c as a cofactor.

The protein resides in the plastid. Its subcellular location is the chloroplast thylakoid membrane. Functionally, component of the cytochrome b6-f complex, which mediates electron transfer between photosystem II (PSII) and photosystem I (PSI), cyclic electron flow around PSI, and state transitions. The protein is Cytochrome b6 of Phalaenopsis aphrodite subsp. formosana (Moth orchid).